A 230-amino-acid chain; its full sequence is Ion-translocating oxidoreductase complex subunit E (230 aa).

Helical transmembrane passes span 22–42 (LLGL…LGLG), 63–83 (TPAE…VSAV), 86–106 (LINA…PLIV), 125–145 (WLSA…MFVL), and 182–202 (PFLL…MLAV).

This sequence belongs to the NqrDE/RnfAE family. In terms of assembly, the complex is composed of six subunits: RsxA, RsxB, RsxC, RsxD, RsxE and RsxG.

It localises to the cell inner membrane. In terms of biological role, part of a membrane-bound complex that couples electron transfer with translocation of ions across the membrane. Required to maintain the reduced state of SoxR. This Salmonella paratyphi A (strain ATCC 9150 / SARB42) protein is Ion-translocating oxidoreductase complex subunit E.